A 254-amino-acid polypeptide reads, in one-letter code: 3-beta-hydroxysteroid dehydrogenase (254 aa).

Residues 12-40 (VTGG…SDIN) and D61 each bind NAD(+). S139 contacts substrate. Residue Y152 is the Proton acceptor of the active site. An NAD(+)-binding site is contributed by K156.

Belongs to the short-chain dehydrogenases/reductases (SDR) family. As to quaternary structure, homotetramer.

The catalysed reaction is testosterone + NAD(+) = androst-4-ene-3,17-dione + NADH + H(+). It carries out the reaction testosterone + NADP(+) = androst-4-ene-3,17-dione + NADPH + H(+). The polypeptide is 3-beta-hydroxysteroid dehydrogenase (Comamonas testosteroni (Pseudomonas testosteroni)).